The sequence spans 502 residues: Phenylacetaldehyde dehydrogenase (502 aa).

251-256 (GSTEVG) contacts NAD(+). Active-site residues include glutamate 273 and cysteine 307.

Belongs to the aldehyde dehydrogenase family.

The enzyme catalyses 2-phenylacetaldehyde + NAD(+) + H2O = 2-phenylacetate + NADH + 2 H(+). It functions in the pathway aromatic compound metabolism. Functionally, phenylacetaldehyde dehydrogenase that catalyzes the last step in the aerobic styrene degradation pathway by mediating oxidation of phenylacetaldehyde to phenylacetic acid. This chain is Phenylacetaldehyde dehydrogenase (styD), found in Pseudomonas fluorescens.